The chain runs to 138 residues: Ribonuclease kappa-A (138 aa).

The N-terminal stretch at 1-24 (MVLYFSPVLTFFLANFFNSKSTTT) is a signal peptide. Over 25–75 (ENLQVFLVENQHRDSKRKINPTFSKKGIEVRQQNENLWSKIVALRFDYSVW) the chain is Extracellular. Residues 76-96 (GIIQLVLMMGLFFYINSVALI) traverse the membrane as a helical segment. Over 97 to 138 (EDLPIDEEFNSVEEFYTAATSAYNQNAYTVGLPVHLCAYASI) the chain is Cytoplasmic.

The protein belongs to the RNase K family.

The protein resides in the membrane. Endoribonuclease. This chain is Ribonuclease kappa-A, found in Ceratitis capitata (Mediterranean fruit fly).